The sequence spans 443 residues: Spermidine hydroxycinnamoyltransferase 1 (443 aa).

Active-site proton acceptor residues include histidine 167 and aspartate 390.

This sequence belongs to the plant acyltransferase family.

Functionally, hydroxycinnamoyl transferase that catalyzes the transfer of an acyl from p-coumaryol-CoA to spermidine, to produce coumaroyl spermidine. Can use feruloyl-CoA as acyl donor. Contributes to the natural variation of spermidine-based phenolamides in rice cultivars. The polypeptide is Spermidine hydroxycinnamoyltransferase 1 (Oryza sativa subsp. japonica (Rice)).